The primary structure comprises 379 residues: Protein COS4 (379 aa).

Transmembrane regions (helical) follow at residues 43-63, 70-90, 233-253, and 255-275; these read IYKSLAFRIWMLLWLPLSVWW, IYPLMVSLLVLFWGPVFVLVI, ISNIFMLIPFLNFLCCIYVSR, and MCLLLRTLYLGWILFMLVQGF.

The protein belongs to the DUP/COS family.

Its subcellular location is the membrane. The sequence is that of Protein COS4 (COS4) from Saccharomyces cerevisiae (strain ATCC 204508 / S288c) (Baker's yeast).